Here is a 1082-residue protein sequence, read N- to C-terminus: Inner tegument protein (1082 aa).

The interval 604–1082 (DHIDCLFNIS…QQDLIAPLTF (479 aa)) is interaction with large tegument protein.

It belongs to the herpesviridae inner tegument protein family. In terms of assembly, interacts (via C-terminus) with the large tegument protein/LTP (via N-terminus).

It localises to the virion tegument. Its subcellular location is the host cytoplasm. It is found in the host nucleus. The protein resides in the host Golgi apparatus. The protein localises to the host trans-Golgi network. Its function is as follows. Plays an essential role in cytoplasmic secondary envelopment during viral egress. Interacts with the capsid via the large tegument protein/LTP and participates in its transport to the host trans-Golgi network (TGN) where secondary envelopment occurs. Modulates tegumentation and capsid accumulation at the viral assembly complex. This chain is Inner tegument protein (U30), found in Homo sapiens (Human).